The following is a 75-amino-acid chain: Large ribosomal subunit protein eL14 (75 aa).

It belongs to the eukaryotic ribosomal protein eL14 family.

This chain is Large ribosomal subunit protein eL14, found in Methanothermobacter thermautotrophicus (strain ATCC 29096 / DSM 1053 / JCM 10044 / NBRC 100330 / Delta H) (Methanobacterium thermoautotrophicum).